We begin with the raw amino-acid sequence, 362 residues long: 3-dehydroquinate synthase (362 aa).

This sequence belongs to the archaeal-type DHQ synthase family.

The enzyme catalyses 2-amino-2,3,7-trideoxy-D-lyxo-hept-6-ulosonate + NAD(+) + H2O = 3-dehydroquinate + NH4(+) + NADH + H(+). Catalyzes the oxidative deamination and cyclization of 2-amino-3,7-dideoxy-D-threo-hept-6-ulosonic acid (ADH) to yield 3-dehydroquinate (DHQ), which is fed into the canonical shikimic pathway of aromatic amino acid biosynthesis. This chain is 3-dehydroquinate synthase, found in Methanococcus aeolicus (strain ATCC BAA-1280 / DSM 17508 / OCM 812 / Nankai-3).